We begin with the raw amino-acid sequence, 105 residues long: Nucleoid-associated protein Sca_0120 (105 aa).

The tract at residues 1-36 (MRGGGNMQQMMKQMQKMQKKMAEEQEKLKDEKVEGS) is disordered. The span at 7-16 (MQQMMKQMQK) shows a compositional bias: low complexity. The segment covering 20–34 (KMAEEQEKLKDEKVE) has biased composition (basic and acidic residues).

The protein belongs to the YbaB/EbfC family. In terms of assembly, homodimer.

The protein localises to the cytoplasm. It is found in the nucleoid. Its function is as follows. Binds to DNA and alters its conformation. May be involved in regulation of gene expression, nucleoid organization and DNA protection. This Staphylococcus carnosus (strain TM300) protein is Nucleoid-associated protein Sca_0120.